We begin with the raw amino-acid sequence, 1274 residues long: ABC multidrug transporter E (1274 aa).

A glycan (N-linked (GlcNAc...) asparagine) is linked at asparagine 48. Residues 120–344 (FCFRVTGLRV…IASPLIIVSK (225 aa)) enclose the ABC transmembrane type-1 1 domain. A run of 4 helical transmembrane segments spans residues 183 to 203 (LALL…LTLV), 205 to 225 (SSAL…MTKI), 280 to 300 (IFGI…SLAF), and 321 to 341 (VFFS…PLII). Residues 377–629 (IIFRDVRFTY…EGGVYRDLVN (253 aa)) form the ABC transporter 1 domain. 412-419 (GPSGSGKS) provides a ligand contact to ATP. Asparagine 473 and asparagine 580 each carry an N-linked (GlcNAc...) asparagine glycan. 2 helical membrane passes run 697–717 (VAVL…SWLF) and 737–757 (FWAL…STVG). Positions 697–984 (VAVLISTAGA…FFSFASNFAQ (288 aa)) constitute an ABC transmembrane type-1 2 domain. N-linked (GlcNAc...) asparagine glycosylation occurs at asparagine 792. 3 helical membrane passes run 818–838 (FPLI…SFGW), 840–860 (LSLV…FMRI), and 924–944 (LIFA…FWYG). The ABC transporter 2 domain maps to 1023–1269 (VEFHDVSFRY…KGTYWQMVSS (247 aa)). The N-linked (GlcNAc...) asparagine glycan is linked to asparagine 1044. 1057 to 1064 (GPSGCGKT) is a binding site for ATP. Residue asparagine 1117 is glycosylated (N-linked (GlcNAc...) asparagine).

The protein belongs to the ABC transporter superfamily. ABCB family. Multidrug resistance exporter (TC 3.A.1.201) subfamily.

The protein localises to the cell membrane. Its function is as follows. Pleiotropic ABC efflux transporter that may be involved in A.fumigatus adaptation to azoles such as vorizonazole. This is ABC multidrug transporter E from Aspergillus fumigatus (strain ATCC MYA-4609 / CBS 101355 / FGSC A1100 / Af293) (Neosartorya fumigata).